We begin with the raw amino-acid sequence, 975 residues long: Probable outer membrane protein PmpA (975 aa).

Positions 1 to 51 are cleaved as a signal peptide; sequence MNRVIEIHAHYDQRQLSQSPNTNFLVHHPYLTLIPKFLLGALIVYAPYSFA. The Autotransporter domain occupies 699–975; it reads RSLIPTSYFG…SLSCGGYVGF (277 aa).

The protein belongs to the PMP outer membrane protein family.

Its subcellular location is the secreted. The protein localises to the cell wall. It is found in the cell outer membrane. The chain is Probable outer membrane protein PmpA (pmpA) from Chlamydia trachomatis serovar D (strain ATCC VR-885 / DSM 19411 / UW-3/Cx).